Reading from the N-terminus, the 272-residue chain is Proteasome assembly chaperone 1 (272 aa).

It belongs to the PSMG1 family. Forms a heterodimer with psmg2.

Chaperone protein which promotes assembly of the 20S proteasome as part of a heterodimer with psmg2. This Dictyostelium discoideum (Social amoeba) protein is Proteasome assembly chaperone 1 (psmG1).